Reading from the N-terminus, the 563-residue chain is Beta-catenin-like protein 1 (563 aa).

M1 is subject to N-acetylmethionine. The disordered stretch occupies residues 1-81 (MDVGELLSYQ…EEEEPLDESS (81 aa)). Positions 16–33 (KRPRDDEEEELKTRRKQT) match the Nuclear localization signal motif. A compositionally biased stretch (basic and acidic residues) spans 34–45 (GPRERGRYREEE). Residues 66–78 (DGEEEEEEEEPLD) are compositionally biased toward acidic residues. HEAT repeat units follow at residues 79-129 (ESSV…VVAT) and 134-176 (YHLL…TLHE). Residue K91 is modified to N6-acetyllysine. Positions 130–140 (MPDLYHLLVEL) match the Nuclear export signal (NES) motif. ARM repeat units follow at residues 178–228 (EEGA…MAEF), 229–273 (RPEM…LQDN), 274–323 (DENR…CLML), 325–363 (SNRERFLKGEGLQLMNLMLREKKVSRSSALKVLDHAMIG), and 364–417 (PEGT…LLRN). S389 is modified (phosphoserine). Residues 476–540 (DMEDEFYLRR…HIIKEYAENI (65 aa)) adopt a coiled-coil conformation. S545 bears the Phosphoserine mark.

As to quaternary structure, component of the PRP19-CDC5L splicing complex composed of a core complex comprising a homotetramer of PRPF19, CDC5L, PLRG1 and BCAS2, and at least three less stably associated proteins CTNNBL1, CWC15 and HSPA8. Interacts directly with CWC15 and CDC5L in the complex. Interacts with AICDA; the interaction is important for the antibody diversification activity of AICDA. Interacts with PRPF31 (via its NLS). Interacts (via its N-terminal NLS) with KPNA1 and KPNA2.

The protein resides in the nucleus. Functionally, component of the PRP19-CDC5L complex that forms an integral part of the spliceosome and is required for activating pre-mRNA splicing. Participates in AID/AICDA-mediated somatic hypermutation (SHM) and class-switch recombination (CSR), 2 processes resulting in the production of high-affinity, mutated isotype-switched antibodies. The chain is Beta-catenin-like protein 1 (Ctnnbl1) from Mus musculus (Mouse).